The sequence spans 469 residues: Probable Xaa-Pro aminopeptidase PEPP (469 aa).

Mn(2+)-binding residues include Asp-265, Asp-276, Glu-399, and Glu-439.

This sequence belongs to the peptidase M24B family. Mn(2+) serves as cofactor.

It catalyses the reaction Release of any N-terminal amino acid, including proline, that is linked to proline, even from a dipeptide or tripeptide.. In terms of biological role, catalyzes the removal of a penultimate prolyl residue from the N-termini of peptides. In Coccidioides posadasii (strain RMSCC 757 / Silveira) (Valley fever fungus), this protein is Probable Xaa-Pro aminopeptidase PEPP (PEPP).